Reading from the N-terminus, the 591-residue chain is V-type ATP synthase alpha chain (591 aa).

Residue 233 to 240 (GPFGAGKT) participates in ATP binding.

The protein belongs to the ATPase alpha/beta chains family.

It catalyses the reaction ATP + H2O + 4 H(+)(in) = ADP + phosphate + 5 H(+)(out). Produces ATP from ADP in the presence of a proton gradient across the membrane. The V-type alpha chain is a catalytic subunit. The sequence is that of V-type ATP synthase alpha chain from Streptococcus pyogenes serotype M12 (strain MGAS2096).